The chain runs to 192 residues: CASP-like protein 1E1 (192 aa).

Residues 1–22 are disordered; the sequence is MDSQNKNSVDAMDGIESRGMKE. At 1–29 the chain is on the cytoplasmic side; the sequence is MDSQNKNSVDAMDGIESRGMKERGGRTNS. The chain crosses the membrane as a helical span at residues 30–50; the sequence is FLVLRVLAFVLTSTAAIVHGV. Over 51 to 81 the chain is Extracellular; sequence NNQTETVPIQLTSSMPPLYVPVVAKWHYLSA. Residue asparagine 52 is glycosylated (N-linked (GlcNAc...) asparagine). The chain crosses the membrane as a helical span at residues 82-102; sequence FVFFVVSNAIACSYAAISVML. The Cytoplasmic segment spans residues 103-118; the sequence is SFCGKKSMVPIILTLD. A helical membrane pass occupies residues 119-139; sequence LLMVALLFSSNGAATAIGVMG. At 140–161 the chain is on the extracellular side; sequence YKGNSHVKWNKVCNVFGKFCNQ. Residues 162 to 182 form a helical membrane-spanning segment; that stretch reads VAASVVLSLIGSIVFVLLVML. Residues 183 to 192 lie on the Cytoplasmic side of the membrane; that stretch reads TAFRLHNKSK.

Belongs to the Casparian strip membrane proteins (CASP) family. As to quaternary structure, homodimer and heterodimers.

The protein localises to the cell membrane. This chain is CASP-like protein 1E1, found in Ricinus communis (Castor bean).